The following is a 150-amino-acid chain: 16.9 kDa class I heat shock protein 1 (150 aa).

An important for thermostability under elevated temperature region spans residues 1 to 42 (MSLVRRSNVFDPFSLDLWDPFDSVFRSVVPATSDNDTAAFAN). In terms of domain architecture, sHSP spans 36-150 (DTAAFANARI…PEVKAIEISG (115 aa)).

Belongs to the small heat shock protein (HSP20) family. In terms of assembly, forms oligomeric structures.

The protein resides in the cytoplasm. This Oryza sativa subsp. japonica (Rice) protein is 16.9 kDa class I heat shock protein 1 (HSP16.9A).